The sequence spans 1025 residues: MAAGKLKKEQQNQSAERESADTGKVNDEDEEHLYGNIDDYKHLIQDEEYDDEDVPHDLQLSEDEYNSERDSSLLAEFSDYGEISEDDEEDFMNAIREASNFKVKKKKKNDKGKSYGRQRKERVLDPEVAQLLSQANEAFVRNDLQVAERLFNEVIKKDARNFAAYETLGDIYQLQGRLNDCCNSWFLAAHLNASDWEFWKIVAILSADLDHVRQAIYCFSRVISLNPMEWESIYRRSMLYKKTGQLARALDGFQRLYMYNPYDANILRELAILYVDYDRIEDSIELYMKVFNANVERREAILAALENALDSSDEESAAEGEDADEKEPLEQDEDRQMFPDINWKKIDAKYKCIPFDWSSLNILAELFLKLAVSEVDGIKTIKKCARWIQRRESQTFWDHVPDDSEFDNRRFKNSTFDSLLAAEKEKSYNIPIDIRVRLGLLRLNTDNLVEALNHFQCLYDETFSDVADLYFEAATALTRAEKYKEAIDFFTPLLSLEEWRTTDVFKPLARCYKEIESYETAKEFYELAIKSEPDDLDIRVSLAEVYYRLNDPETFKHMLVDVVEMRKHQVDETLHRISNEKSSNDTSDISSKPLLEDSKFRTFRKKKRTPYDAERERIERERRITAKVVDKYEKMKKFELNSGLNEAKQASIWINTVSELVDIFSSVKNFFMKSRSRKFVGILRRTKKFNTELDFQIERLSKLAEGDSVFEGPLMEERVTLTSATELRGLSYEQWFELFMELSLVIAKYQSVEDGLSVVETAQEVNVFFQDPERVKMMKFVKLAIVLQMDDEEELAENLRGLLNQFQFNRKVLQVFMYSLCRGPSSLNILSSTIQQKFFLRQLKAFDSCRYNTEVNGQASITNKEVYNPNKKSSPYLYYIYAVLLYSSRGFLSALQYLTRLEEDIPDDPMVNLLMGLSHIHRAMQRLTAQRHFQIFHGLRYLYRYHKIRKSLYTDLEKQEADYNLGRAFHLIGLVSIAIEYYNRVLENYDDGKLKKHAAYNSIIIYQQSGNVELADHLMEKYLSI.

The segment covering 1–26 (MAAGKLKKEQQNQSAERESADTGKVN) has biased composition (basic and acidic residues). The disordered stretch occupies residues 1-71 (MAAGKLKKEQ…EDEYNSERDS (71 aa)). Residues 46–65 (DEEYDDEDVPHDLQLSEDEY) are compositionally biased toward acidic residues. 5 TPR repeats span residues 128-161 (VAQLLSQANEAFVRNDLQVAERLFNEVIKKDARN), 162-195 (FAAYETLGDIYQLQGRLNDCCNSWFLAAHLNASD), 196-229 (WEFWKIVAILSADLDHVRQAIYCFSRVISLNPME), 230-263 (WESIYRRSMLYKKTGQLARALDGFQRLYMYNPYD), and 264-297 (ANILRELAILYVDYDRIEDSIELYMKVFNANVER). Positions 128-569 (VAQLLSQANE…VDVVEMRKHQ (442 aa)) are sufficient to bind BDP1. Residues 309–334 (LDSSDEESAAEGEDADEKEPLEQDED) are disordered. S311 carries the phosphoserine modification. The span at 311–325 (SSDEESAAEGEDADE) shows a compositional bias: acidic residues. 6 TPR repeats span residues 432–465 (IDIRVRLGLLRLNTDNLVEALNHFQCLYDETFSD), 467–501 (ADLYFEAATALTRAEKYKEAIDFFTPLLSLEEWRT), 502–535 (TDVFKPLARCYKEIESYETAKEFYELAIKSEPDD), 536–569 (LDIRVSLAEVYYRLNDPETFKHMLVDVVEMRKHQ), 875–908 (PYLYYIYAVLLYSSRGFLSALQYLTRLEEDIPDD), and 959–992 (QEADYNLGRAFHLIGLVSIAIEYYNRVLENYDDG).

In terms of assembly, component of the TFIIIC complex composed of TFC1, TFC3, TFC4, TFC6, TFC7 and TFC8. The subunits are organized in two globular domains, tauA and tauB, connected by a proteolysis-sensitive and flexible linker. Interacts with TFC1, TFC3, TFC6, TFIIIB subunits BRF1 and BDP1, and with RNA polymerase III subunit RPC10. Post-translationally, phosphorylated.

It localises to the nucleus. Its function is as follows. TFIIIC mediates tRNA and 5S RNA gene activation by binding to intragenic promoter elements. Upstream of the transcription start site, TFIIIC assembles the initiation complex TFIIIB-TFIIIC-tDNA, which is sufficient for RNA polymerase III recruitment and function. Part of the tauA domain of TFIIIC that binds boxA DNA promoter sites of tRNA and similar genes. TFC4 is the TFIIIB-assembling subunit of TFIIIC and essential for viability. This Saccharomyces cerevisiae (strain ATCC 204508 / S288c) (Baker's yeast) protein is Transcription factor tau 131 kDa subunit (TFC4).